Here is a 243-residue protein sequence, read N- to C-terminus: Exosome complex component Rrp41 (243 aa).

Belongs to the RNase PH family. Rrp41 subfamily. In terms of assembly, component of the archaeal exosome complex. Forms a hexameric ring-like arrangement composed of 3 Rrp41-Rrp42 heterodimers. The hexameric ring associates with a trimer of Rrp4 and/or Csl4 subunits.

The protein localises to the cytoplasm. Catalytic component of the exosome, which is a complex involved in RNA degradation. Has 3'-&gt;5' exoribonuclease activity. Can also synthesize heteromeric RNA-tails. The sequence is that of Exosome complex component Rrp41 from Sulfurisphaera tokodaii (strain DSM 16993 / JCM 10545 / NBRC 100140 / 7) (Sulfolobus tokodaii).